Reading from the N-terminus, the 476-residue chain is Transcription factor EB (476 aa).

Disordered regions lie at residues 1 to 66 and 107 to 142; these read MASR…PPVP and HISP…APNS. Residues 1 to 167 are interaction with ACSS2; it reads MASRIGLRMQ…DDVIDNIMRL (167 aa). The segment covering 26 to 44 has biased composition (low complexity); the sequence is QQQAVMHYMQQQQQQQQQQ. Phosphoserine occurs at positions 109, 114, 122, and 138. Positions 132 to 142 are enriched in low complexity; that stretch reads SSSAGNSAPNS. The Nuclear export signal signature appears at 136–153; it reads GNSAPNSPMAMLHIGSNP. Position 142 is a phosphoserine; by MTOR (serine 142). The interval 156–165 is strong transcription activation domain; the sequence is ELDDVIDNIM. Position 183 is a phosphothreonine (threonine 183). Serine 211 is subject to Phosphoserine; by MTOR. Position 212 is an S-(2,3-dicarboxypropyl)cysteine (cysteine 212). One can recognise a bHLH domain in the interval 235–288; sequence QKKDNHNLIERRRRFNINDRIKELGMLIPKANDLDVRWNKGTILKASVDYIRRM. Positions 245–248 match the Nuclear localization signal motif; that stretch reads RRRR. Residues 298–319 form a leucine-zipper region; that stretch reads LENHSRRLEMTNKQLWLRIQEL. The residue at position 332 (serine 332) is a Phosphoserine. Residues 349–430 form a disordered region; it reads ELPSEEGPGE…HGSPFPSLSK (82 aa). The span at 369 to 390 shows a compositional bias: pro residues; the sequence is PEPLPALPPQAPLPLPTQPPSP. A phosphoserine mark is found at serine 423, serine 441, serine 466, serine 467, and serine 469. The segment covering 447–469 has biased composition (low complexity); sequence SDPLLSTMSPEASKASSRRSSFS. Residues 447–476 form a disordered region; the sequence is SDPLLSTMSPEASKASSRRSSFSMEEGDVL.

Belongs to the MiT/TFE family. Homodimer and heterodimer; with TFE3 or MITF. Interacts (when phosphorylated by MTOR) with YWHAZ; promoting retention in the cytosol. Interacts with IRGM; promoting association between TFEB and PPP3CB and dephosphorylation. Interacts with small GTPases Rag (RagA/RRAGA, RagB/RRAGB, RagC/RRAGC and/or RagD/RRAGD); promoting its recruitment to lysosomal membrane in the presence of nutrients. Interacts with ACSS2. Phosphorylation at Ser-211 by MTOR via non-canonical mTORC1 pathway regulates its subcellular location and activity. When nutrients are present, phosphorylation by MTOR promotes association with 14-3-3/YWHA adapters and retention in the cytosol. Inhibition of mTORC1, starvation and lysosomal disruption, promotes dephosphorylation by calcineurin PPP3CB and translocation to the nucleus. Dephosphorylated by calcineurin PPP3CB in response to lysosomal Ca(2+) release. IRGM promotes dephosphorylation by calcineurin PPP3CB, resulting in TFEB nuclear translocation and stimulation of lysosomal biogenesis. Dephosphorylated by phosphatase PPP3CA following Coxsackievirus B3 infection, leading to nuclear translocation. Exported from the nucleus in a mTORC1-dependent manner in response to nutrient availability. In terms of processing, alkylated via a non-enzymatic covalent modification. Itaconate, an anti-inflammatory metabolite generated in response to lipopolysaccharide, alkylates Cys-212, preventing association with 14-3-3/YWHA adapters, thereby promoting nuclear translocation and activity. Post-translationally, sumoylated; does not affect dimerization with MITF. (Microbial infection) Cleavage by Coxsackievirus B3 protease 3C after site Gln-60. This non-phosphorylated cleavage product retains its ability to interact with TFEB, TFE3 or MITF and presents impaired transcriptional activity, resulting in disruption of lysosomal functions and increased viral infection.

It localises to the nucleus. It is found in the cytoplasm. The protein localises to the cytosol. The protein resides in the lysosome membrane. Inhibited by eltrombopag drug, which binds to the bHLH domain and disrupts DNA-binding. Functionally, transcription factor that acts as a master regulator of lysosomal biogenesis, autophagy, lysosomal exocytosis, lipid catabolism, energy metabolism and immune response. Specifically recognizes and binds E-box sequences (5'-CANNTG-3'); efficient DNA-binding requires dimerization with itself or with another MiT/TFE family member such as TFE3 or MITF. Involved in the cellular response to amino acid availability by acting downstream of MTOR: in the presence of nutrients, TFEB phosphorylation by MTOR promotes its cytosolic retention and subsequent inactivation. Upon starvation or lysosomal stress, inhibition of MTOR induces TFEB dephosphorylation, resulting in nuclear localization and transcription factor activity. Specifically recognizes and binds the CLEAR-box sequence (5'-GTCACGTGAC-3') present in the regulatory region of many lysosomal genes, leading to activate their expression, thereby playing a central role in expression of lysosomal genes. Regulates lysosomal positioning in response to nutrient deprivation by promoting the expression of PIP4P1. Acts as a positive regulator of autophagy by promoting expression of genes involved in autophagy. In association with TFE3, activates the expression of CD40L in T-cells, thereby playing a role in T-cell-dependent antibody responses in activated CD4(+) T-cells and thymus-dependent humoral immunity. Specifically recognizes the gamma-E3 box, a subset of E-boxes, present in the heavy-chain immunoglobulin enhancer. Plays a role in the signal transduction processes required for normal vascularization of the placenta. Involved in the immune response to infection by the bacteria S.aureus, S.typhimurium or S.enterica: infection promotes itaconate production, leading to alkylation, resulting in nuclear localization and transcription factor activity. Itaconate-mediated alkylation activates TFEB-dependent lysosomal biogenesis, facilitating the bacteria clearance during the antibacterial innate immune response. In association with ACSS2, promotes the expression of genes involved in lysosome biogenesis and both autophagy upon glucose deprivation. The protein is Transcription factor EB of Homo sapiens (Human).